The primary structure comprises 260 residues: Major prion protein (260 aa).

Residues 1-22 form the signal peptide; it reads MANLGCWMLVLFVATWSDLGLC. Residues 23 to 237 form an interaction with GRB2, ERI3 and SYN1 region; sequence KKRPKPGGWN…ESQAYYQRGS (215 aa). Residues 26 to 112 are disordered; it reads PKPGGWNTGG…HNQWNKPSKP (87 aa). A run of 6 repeats spans residues 51–58, 59–66, 67–74, 75–82, 83–90, and 91–98. The interval 51–98 is 6 X 8 AA tandem repeats of P-H-G-G-G-W-G-Q; the sequence is PQGGGWGQPHGGGWGQPHGGGWGQPHGGGWGQPHGGGWGQPHGGGWGQ. Residues 52-102 are compositionally biased toward gly residues; the sequence is QGGGWGQPHGGGWGQPHGGGWGQPHGGGWGQPHGGGWGQPHGGGWGQGGGT. Cu(2+) is bound by residues H68, G69, G70, H76, G77, G78, H84, G85, G86, H92, G93, and G94. C186 and C221 are disulfide-bonded. 2 N-linked (GlcNAc...) asparagine glycosylation sites follow: N188 and N204. S237 carries the GPI-anchor amidated serine lipid modification. The propeptide at 238 to 260 is removed in mature form; that stretch reads SMVLFSSPPVILLISFLIFLIVG.

The protein belongs to the prion family. Monomer and homodimer. Has a tendency to aggregate into amyloid fibrils containing a cross-beta spine, formed by a steric zipper of superposed beta-strands. Soluble oligomers may represent an intermediate stage on the path to fibril formation. Copper binding may promote oligomerization. Interacts with GRB2, APP, ERI3/PRNPIP and SYN1. Mislocalized cytosolically exposed PrP interacts with MGRN1; this interaction alters MGRN1 subcellular location and causes lysosomal enlargement. Interacts with KIAA1191.

It localises to the cell membrane. It is found in the golgi apparatus. Its primary physiological function is unclear. Has cytoprotective activity against internal or environmental stresses. May play a role in neuronal development and synaptic plasticity. May be required for neuronal myelin sheath maintenance. May play a role in iron uptake and iron homeostasis. Soluble oligomers are toxic to cultured neuroblastoma cells and induce apoptosis (in vitro). Association with GPC1 (via its heparan sulfate chains) targets PRNP to lipid rafts. Also provides Cu(2+) or Zn(2+) for the ascorbate-mediated GPC1 deaminase degradation of its heparan sulfate side chains. This Saimiri sciureus (Common squirrel monkey) protein is Major prion protein (PRNP).